The primary structure comprises 119 residues: Beta-2-microglobulin (119 aa).

A signal peptide spans 1-20; that stretch reads MARSVVAALLVLLSLSGLEA. Residues 25-114 form the Ig-like C1-type domain; it reads PKIQVYSRHP…VTFPTPKTVK (90 aa). Cysteines 45 and 100 form a disulfide.

This sequence belongs to the beta-2-microglobulin family. Heterodimer of an alpha chain and a beta chain. Beta-2-microglobulin is the beta-chain of major histocompatibility complex class I molecules.

Its subcellular location is the secreted. Its function is as follows. Component of the class I major histocompatibility complex (MHC). Involved in the presentation of peptide antigens to the immune system. The chain is Beta-2-microglobulin (B2M) from Saimiri boliviensis boliviensis (Bolivian squirrel monkey).